We begin with the raw amino-acid sequence, 712 residues long: Ribosomal RNA large subunit methyltransferase K/L (712 aa).

The THUMP domain maps to glycine 46 to leucine 157.

Belongs to the methyltransferase superfamily. RlmKL family.

It is found in the cytoplasm. It catalyses the reaction guanosine(2445) in 23S rRNA + S-adenosyl-L-methionine = N(2)-methylguanosine(2445) in 23S rRNA + S-adenosyl-L-homocysteine + H(+). The catalysed reaction is guanosine(2069) in 23S rRNA + S-adenosyl-L-methionine = N(2)-methylguanosine(2069) in 23S rRNA + S-adenosyl-L-homocysteine + H(+). In terms of biological role, specifically methylates the guanine in position 2445 (m2G2445) and the guanine in position 2069 (m7G2069) of 23S rRNA. The chain is Ribosomal RNA large subunit methyltransferase K/L from Actinobacillus pleuropneumoniae serotype 7 (strain AP76).